The primary structure comprises 1358 residues: DNA-directed RNA polymerase subunit beta (1358 aa).

This sequence belongs to the RNA polymerase beta chain family. As to quaternary structure, the RNAP catalytic core consists of 2 alpha, 1 beta, 1 beta' and 1 omega subunit. When a sigma factor is associated with the core the holoenzyme is formed, which can initiate transcription.

The catalysed reaction is RNA(n) + a ribonucleoside 5'-triphosphate = RNA(n+1) + diphosphate. DNA-dependent RNA polymerase catalyzes the transcription of DNA into RNA using the four ribonucleoside triphosphates as substrates. The polypeptide is DNA-directed RNA polymerase subunit beta (Chromohalobacter salexigens (strain ATCC BAA-138 / DSM 3043 / CIP 106854 / NCIMB 13768 / 1H11)).